The sequence spans 966 residues: Leucine--tRNA ligase (966 aa).

Positions proline 41–histidine 51 match the 'HIGH' region motif. The 'KMSKS' region motif lies at lysine 632 to serine 636. Lysine 635 is a binding site for ATP.

It belongs to the class-I aminoacyl-tRNA synthetase family.

It localises to the cytoplasm. It carries out the reaction tRNA(Leu) + L-leucine + ATP = L-leucyl-tRNA(Leu) + AMP + diphosphate. This is Leucine--tRNA ligase from Methanosarcina barkeri (strain Fusaro / DSM 804).